The sequence spans 150 residues: D-aminoacyl-tRNA deacylase (150 aa).

The short motif at 138–139 (GP) is the Gly-cisPro motif, important for rejection of L-amino acids element.

The protein belongs to the DTD family. As to quaternary structure, homodimer.

It is found in the cytoplasm. The enzyme catalyses glycyl-tRNA(Ala) + H2O = tRNA(Ala) + glycine + H(+). The catalysed reaction is a D-aminoacyl-tRNA + H2O = a tRNA + a D-alpha-amino acid + H(+). In terms of biological role, an aminoacyl-tRNA editing enzyme that deacylates mischarged D-aminoacyl-tRNAs. Also deacylates mischarged glycyl-tRNA(Ala), protecting cells against glycine mischarging by AlaRS. Acts via tRNA-based rather than protein-based catalysis; rejects L-amino acids rather than detecting D-amino acids in the active site. By recycling D-aminoacyl-tRNA to D-amino acids and free tRNA molecules, this enzyme counteracts the toxicity associated with the formation of D-aminoacyl-tRNA entities in vivo and helps enforce protein L-homochirality. This Parabacteroides distasonis (strain ATCC 8503 / DSM 20701 / CIP 104284 / JCM 5825 / NCTC 11152) protein is D-aminoacyl-tRNA deacylase.